A 338-amino-acid polypeptide reads, in one-letter code: Ketol-acid reductoisomerase (NADP(+)) (338 aa).

The 181-residue stretch at 1-181 (MKVFYDKDAD…GGGRAGIIET (181 aa)) folds into the KARI N-terminal Rossmann domain. NADP(+) contacts are provided by residues 24–27 (YGSQ), Arg47, and Ser52. Residue His107 is part of the active site. Gly133 is a binding site for NADP(+). In terms of domain architecture, KARI C-terminal knotted spans 182–327 (NFREETETDL…AKLRAMMPWI (146 aa)). Mg(2+) is bound by residues Asp190, Glu194, Glu226, and Glu230. Ser251 contacts substrate.

Belongs to the ketol-acid reductoisomerase family. Mg(2+) is required as a cofactor.

The enzyme catalyses (2R)-2,3-dihydroxy-3-methylbutanoate + NADP(+) = (2S)-2-acetolactate + NADPH + H(+). The catalysed reaction is (2R,3R)-2,3-dihydroxy-3-methylpentanoate + NADP(+) = (S)-2-ethyl-2-hydroxy-3-oxobutanoate + NADPH + H(+). The protein operates within amino-acid biosynthesis; L-isoleucine biosynthesis; L-isoleucine from 2-oxobutanoate: step 2/4. Its pathway is amino-acid biosynthesis; L-valine biosynthesis; L-valine from pyruvate: step 2/4. Its function is as follows. Involved in the biosynthesis of branched-chain amino acids (BCAA). Catalyzes an alkyl-migration followed by a ketol-acid reduction of (S)-2-acetolactate (S2AL) to yield (R)-2,3-dihydroxy-isovalerate. In the isomerase reaction, S2AL is rearranged via a Mg-dependent methyl migration to produce 3-hydroxy-3-methyl-2-ketobutyrate (HMKB). In the reductase reaction, this 2-ketoacid undergoes a metal-dependent reduction by NADPH to yield (R)-2,3-dihydroxy-isovalerate. This Cupriavidus necator (strain ATCC 17699 / DSM 428 / KCTC 22496 / NCIMB 10442 / H16 / Stanier 337) (Ralstonia eutropha) protein is Ketol-acid reductoisomerase (NADP(+)).